The sequence spans 251 residues: 1-(5-phosphoribosyl)-5-[(5-phosphoribosylamino)methylideneamino] imidazole-4-carboxamide isomerase (251 aa).

The active-site Proton acceptor is aspartate 8. Aspartate 131 acts as the Proton donor in catalysis.

Belongs to the HisA/HisF family.

It localises to the cytoplasm. It carries out the reaction 1-(5-phospho-beta-D-ribosyl)-5-[(5-phospho-beta-D-ribosylamino)methylideneamino]imidazole-4-carboxamide = 5-[(5-phospho-1-deoxy-D-ribulos-1-ylimino)methylamino]-1-(5-phospho-beta-D-ribosyl)imidazole-4-carboxamide. It participates in amino-acid biosynthesis; L-histidine biosynthesis; L-histidine from 5-phospho-alpha-D-ribose 1-diphosphate: step 4/9. The chain is 1-(5-phosphoribosyl)-5-[(5-phosphoribosylamino)methylideneamino] imidazole-4-carboxamide isomerase from Burkholderia cenocepacia (strain ATCC BAA-245 / DSM 16553 / LMG 16656 / NCTC 13227 / J2315 / CF5610) (Burkholderia cepacia (strain J2315)).